The sequence spans 1299 residues: Tubulin polyglutamylase TTLL5 (1299 aa).

Residues arginine 62–serine 407 form the TTL domain. ATP-binding positions include lysine 180, arginine 186–glycine 187, serine 208–isoleucine 211, and lysine 221–aspartate 223. Residue arginine 186 participates in a protein binding. Arginine 247 lines the L-glutamate pocket. Threonine 268 to asparagine 269 lines the ATP pocket. Residues tyrosine 270, serine 271, and lysine 293 each coordinate L-glutamate. Aspartate 353, glutamate 366, and asparagine 368 together coordinate Mg(2+). Positions proline 378–threonine 488 are c-MTBD region. Lysine 384 contributes to the L-glutamate binding site. 5 disordered regions span residues glutamate 589 to glutamate 626, glycine 832 to histidine 853, serine 918 to alanine 941, arginine 1088 to glutamine 1130, and serine 1217 to glycine 1275. The span at glutamate 597–glutamine 617 shows a compositional bias: acidic residues. Low complexity predominate over residues serine 838 to serine 847. Polar residues-rich tracts occupy residues serine 1104–glutamine 1130, serine 1217–proline 1230, and alanine 1258–glycine 1275.

It belongs to the tubulin--tyrosine ligase family. In terms of assembly, interacts with the transcriptional coactivators NCOA1/SRC-1 and NCOA2/TIF2. It depends on Mg(2+) as a cofactor.

The protein resides in the cell projection. It is found in the cilium. Its subcellular location is the cytoplasm. The protein localises to the cytoskeleton. It localises to the cilium basal body. The protein resides in the nucleus. It carries out the reaction L-glutamyl-[protein] + L-glutamate + ATP = gamma-L-glutamyl-L-glutamyl-[protein] + ADP + phosphate + H(+). The enzyme catalyses (L-glutamyl)(n)-gamma-L-glutamyl-L-glutamyl-[protein] + L-glutamate + ATP = (L-glutamyl)(n+1)-gamma-L-glutamyl-L-glutamyl-[protein] + ADP + phosphate + H(+). Functionally, polyglutamylase which modifies tubulin, generating polyglutamate side chains on the gamma-carboxyl group of specific glutamate residues within the C-terminal tail of tubulin. Preferentially mediates ATP-dependent initiation step of the polyglutamylation reaction over the elongation step. Preferentially modifies the alpha-tubulin tail over a beta-tail. Required for CCSAP localization to both polyglutamylated spindle and cilia microtubules. Increases the effects of transcriptional coactivator NCOA2/TIF2 in glucocorticoid receptor-mediated repression and induction and in androgen receptor-mediated induction. This chain is Tubulin polyglutamylase TTLL5 (TTLL5), found in Pongo abelii (Sumatran orangutan).